A 522-amino-acid polypeptide reads, in one-letter code: Protein nucleotidyltransferase YdiU (522 aa).

Residues Gly-109, Gly-111, Arg-112, Lys-132, Asp-144, Gly-145, Arg-195, and Arg-202 each contribute to the ATP site. The active-site Proton acceptor is Asp-271. Mg(2+)-binding residues include Asn-272 and Asp-281. An ATP-binding site is contributed by Asp-281.

The protein belongs to the SELO family. Requires Mg(2+) as cofactor. The cofactor is Mn(2+).

The catalysed reaction is L-seryl-[protein] + ATP = 3-O-(5'-adenylyl)-L-seryl-[protein] + diphosphate. It carries out the reaction L-threonyl-[protein] + ATP = 3-O-(5'-adenylyl)-L-threonyl-[protein] + diphosphate. It catalyses the reaction L-tyrosyl-[protein] + ATP = O-(5'-adenylyl)-L-tyrosyl-[protein] + diphosphate. The enzyme catalyses L-histidyl-[protein] + UTP = N(tele)-(5'-uridylyl)-L-histidyl-[protein] + diphosphate. The catalysed reaction is L-seryl-[protein] + UTP = O-(5'-uridylyl)-L-seryl-[protein] + diphosphate. It carries out the reaction L-tyrosyl-[protein] + UTP = O-(5'-uridylyl)-L-tyrosyl-[protein] + diphosphate. In terms of biological role, nucleotidyltransferase involved in the post-translational modification of proteins. It can catalyze the addition of adenosine monophosphate (AMP) or uridine monophosphate (UMP) to a protein, resulting in modifications known as AMPylation and UMPylation. The sequence is that of Protein nucleotidyltransferase YdiU from Burkholderia ambifaria (strain MC40-6).